We begin with the raw amino-acid sequence, 92 residues long: Putative pterin-4-alpha-carbinolamine dehydratase (92 aa).

It belongs to the pterin-4-alpha-carbinolamine dehydratase family.

The catalysed reaction is (4aS,6R)-4a-hydroxy-L-erythro-5,6,7,8-tetrahydrobiopterin = (6R)-L-erythro-6,7-dihydrobiopterin + H2O. In Acidobacterium capsulatum (strain ATCC 51196 / DSM 11244 / BCRC 80197 / JCM 7670 / NBRC 15755 / NCIMB 13165 / 161), this protein is Putative pterin-4-alpha-carbinolamine dehydratase.